We begin with the raw amino-acid sequence, 183 residues long: MASSLMSNAATTMAAATTTAQANMVAPFNGLKSISAFPVTRKNNDITSVASNGGRVQCMQVWPPLGMKKFETLSYLPPLSEESLLKEVQYLLNNGWVPCLEFEPTHGFVYREHGNTPGYYDGRYWTMWKLPMFGCTDPSQVVAELEEAKKAYPEAFIRIIGFDNVRQVQCVSFIAYKPASYGA.

The N-terminal 57 residues, 1 to 57 (MASSLMSNAATTMAAATTTAQANMVAPFNGLKSISAFPVTRKNNDITSVASNGGRVQ), are a transit peptide targeting the chloroplast.

Belongs to the RuBisCO small chain family. As to quaternary structure, heterohexadecamer of 8 large and 8 small subunits.

Its subcellular location is the plastid. The protein localises to the chloroplast. Functionally, ruBisCO catalyzes two reactions: the carboxylation of D-ribulose 1,5-bisphosphate, the primary event in carbon dioxide fixation, as well as the oxidative fragmentation of the pentose substrate. Both reactions occur simultaneously and in competition at the same active site. Although the small subunit is not catalytic it is essential for maximal activity. This chain is Ribulose bisphosphate carboxylase small subunit, chloroplastic 4, found in Mesembryanthemum crystallinum (Common ice plant).